Consider the following 322-residue polypeptide: Olfactory receptor 5P2 (322 aa).

At Met-1–Val-28 the chain is on the extracellular side. Asn-8 carries an N-linked (GlcNAc...) asparagine glycan. The helical transmembrane segment at Ile-29–Ile-42 threads the bilayer. Topologically, residues Ile-43 to Gln-50 are cytoplasmic. The helical transmembrane segment at Leu-51–Ser-71 threads the bilayer. Residues Ser-72 to Ile-95 lie on the Extracellular side of the membrane. Cysteines 93 and 185 form a disulfide. A helical transmembrane segment spans residues Gln-96–Tyr-116. Topologically, residues Asp-117 to Gln-135 are cytoplasmic. A helical membrane pass occupies residues Val-136–Thr-156. The Extracellular portion of the chain corresponds to Thr-157–Thr-192. Residues Val-193–Cys-213 form a helical membrane-spanning segment. At Tyr-214–Ala-233 the chain is on the cytoplasmic side. Residues Phe-234–Ile-254 form a helical membrane-spanning segment. At Tyr-255 to Asn-267 the chain is on the extracellular side. An N-linked (GlcNAc...) asparagine glycan is attached at Asn-259. Residues Lys-268–Leu-288 form a helical membrane-spanning segment. Topologically, residues Arg-289–Thr-322 are cytoplasmic.

It belongs to the G-protein coupled receptor 1 family. Expressed in the tongue.

Its subcellular location is the cell membrane. In terms of biological role, odorant receptor (Potential). May be involved in taste perception. This Homo sapiens (Human) protein is Olfactory receptor 5P2 (OR5P2).